The chain runs to 375 residues: N-acetyldiaminopimelate deacetylase (375 aa).

The active site involves D69. E128 (proton acceptor) is an active-site residue.

It belongs to the peptidase M20A family. N-acetyldiaminopimelate deacetylase subfamily.

The catalysed reaction is N-acetyl-(2S,6S)-2,6-diaminopimelate + H2O = (2S,6S)-2,6-diaminopimelate + acetate. Its pathway is amino-acid biosynthesis; L-lysine biosynthesis via DAP pathway; LL-2,6-diaminopimelate from (S)-tetrahydrodipicolinate (acetylase route): step 3/3. In terms of biological role, catalyzes the conversion of N-acetyl-diaminopimelate to diaminopimelate and acetate. The chain is N-acetyldiaminopimelate deacetylase from Streptococcus suis (strain 05ZYH33).